The sequence spans 400 residues: Leukosialin (400 aa).

The first 19 residues, 1–19, serve as a signal peptide directing secretion; that stretch reads MATLLLLLGVLVVSPDALG. Residues 20-253 lie on the Extracellular side of the membrane; the sequence is STTAVQTPTS…PFRNPDENSR (234 aa). 4 O-linked (GalNAc...) threonine glycosylation sites follow: T21, T22, T26, and T28. Composition is skewed to polar residues over residues 21 to 51 and 58 to 112; these read TTAV…SITS and TGDQ…TPHA. The disordered stretch occupies residues 21–224; it reads TTAVQTPTSG…SSGASGPQVS (204 aa). Residues S29 and S35 are each glycosylated (O-linked (GalNAc...) serine). O-linked (GalNAc...) threonine glycosylation occurs at T36. O-linked (GalNAc...) serine glycosylation is found at S37, S41, and S42. O-linked (GalNAc...) threonine glycans are attached at residues T46 and T47. An O-linked (GalNAc...) serine glycan is attached at S48. T50, T58, and T69 each carry an O-linked (GalNAc...) threonine glycan. O-linked (GalNAc...) serine glycans are attached at residues S99 and S103. Residues T109 and T113 are each glycosylated (O-linked (GalNAc...) threonine). An O-linked (GalNAc...) serine glycan is attached at S114. Composition is skewed to polar residues over residues 121-164 and 172-182; these read TANS…SRGT and ATVSLETSKGT. O-linked (GalNAc...) threonine glycosylation is found at T136, T137, T173, and T178. The segment covering 196-211 has biased composition (low complexity); it reads TSTGTTGPPVTMTTGS. A compositionally biased stretch (polar residues) spans 212-224; sequence LEPSSGASGPQVS. N239 is a glycosylation site (N-linked (GlcNAc...) asparagine). The helical transmembrane segment at 254–276 threads the bilayer; the sequence is GMLPVAVLVALLAVIVLVALLLL. Topologically, residues 277–400 are cytoplasmic; sequence WRRRQKRRTG…EPEGGDGAAP (124 aa). Positions 278 to 308 are required for interaction with EZR, MSN and RDX and for co-localization to microvilli; that stretch reads RRRQKRRTGALVLSRGGKRNGVVDAWAGPAQ. Positions 282–296 match the Nuclear localization signal motif; sequence KRRTGALVLSRGGKR. S291 carries the phosphoserine modification. Gly residues predominate over residues 320 to 332; sequence GGSGGDKGSGFPD. The interval 320–400 is disordered; that stretch reads GGSGGDKGSG…EPEGGDGAAP (81 aa). S336 carries the post-translational modification Phosphoserine. The residue at position 341 (T341) is a Phosphothreonine. At S351 the chain carries Phosphoserine. Residue S355 is modified to Phosphoserine; by PKC/PRKCQ. Phosphoserine is present on residues S368 and S379.

In terms of assembly, interacts with SIGLEC1. As to quaternary structure, monomer. Interacts with CTNNB1. Interacts with RDX (via FERM domain), EZR and MSN. Glycosylated; has a high content of sialic acid and O-linked carbohydrate structures. Post-translationally, phosphorylation at Ser-355 is regulated by chemokines, requires its association with ERM proteins (EZR, RDX and MSN) and is essential for its function in the regulation of T-cell trafficking to lymph nodes. In terms of processing, has a high content of sialic acid and O-linked carbohydrate structures. Cleavage by CTSG releases its extracellular domain and triggers its intramembrane proteolysis by gamma-secretase releasing the CD43 cytoplasmic tail chain (CD43-ct) which translocates to the nucleus. Post-translationally, sumoylated. As to expression, cell surface of thymocytes, T-lymphocytes, neutrophils, plasma cells and myelomas.

Its subcellular location is the membrane. It localises to the cell projection. The protein resides in the microvillus. It is found in the uropodium. The protein localises to the nucleus. Its subcellular location is the PML body. Predominant cell surface sialoprotein of leukocytes which regulates multiple T-cell functions, including T-cell activation, proliferation, differentiation, trafficking and migration. Positively regulates T-cell trafficking to lymph-nodes via its association with ERM proteins (EZR, RDX and MSN). Negatively regulates Th2 cell differentiation and predisposes the differentiation of T-cells towards a Th1 lineage commitment. Promotes the expression of IFN-gamma by T-cells during T-cell receptor (TCR) activation of naive cells and induces the expression of IFN-gamma by CD4(+) T-cells and to a lesser extent by CD8(+) T-cells. Plays a role in preparing T-cells for cytokine sensing and differentiation into effector cells by inducing the expression of cytokine receptors IFNGR and IL4R, promoting IFNGR and IL4R signaling and by mediating the clustering of IFNGR with TCR. Acts as a major E-selectin ligand responsible for Th17 cell rolling on activated vasculature and recruitment during inflammation. Mediates Th17 cells, but not Th1 cells, adhesion to E-selectin. Acts as a T-cell counter-receptor for SIGLEC1. Functionally, protects cells from apoptotic signals, promoting cell survival. The polypeptide is Leukosialin (SPN) (Homo sapiens (Human)).